The following is a 147-amino-acid chain: Transcriptional repressor NrdR (147 aa).

A zinc finger spans residues 3 to 34 (CPFCGHLETQVVETRVSEDADFVRRRRQCSAC). An ATP-cone domain is found at 49–139 (PVVVKKDGSR…VYRSFEDVDE (91 aa)).

Belongs to the NrdR family. The cofactor is Zn(2+).

Its function is as follows. Negatively regulates transcription of bacterial ribonucleotide reductase nrd genes and operons by binding to NrdR-boxes. This Variovorax paradoxus (strain S110) protein is Transcriptional repressor NrdR.